We begin with the raw amino-acid sequence, 220 residues long: Ras-related protein Rab-3A (220 aa).

Residues S31, S32, V33, G34, K35, T36, S37, T48, P49, S53, and T54 each contribute to the GTP site. Position 36 (T36) interacts with Mg(2+). Residues 49-58 (PAFVSTVGID) carry the Switch 1 motif. Mg(2+)-binding residues include T54 and D77. G80 provides a ligand contact to GTP. A Switch 2 motif is present at residues 80–96 (GQERYRTITTAYYRGAM). At T86 the chain carries Phosphothreonine. GTP is bound by residues N135, K136, D138, A166, and K167. A phosphoserine mark is found at S188 and S190. Residues 194–220 (ADPAVTGAKQGPQLTDQQAPPHQDCAC) are disordered. 2 S-geranylgeranyl cysteine lipidation sites follow: C218 and C220. C220 carries the post-translational modification Cysteine methyl ester.

This sequence belongs to the small GTPase superfamily. Rab family. In terms of assembly, interacts with RIMS1 and RIMS2. Interacts with Rabphilin-3A/RPH3A and Rab effector Noc2/RPH3AL. Interacts with SYTL4. Interacts with RAB3IP. Interacts with SGSM1 and SGSM3. Interacts with SYT1. Interacts with MYH9; this interaction is essential for lysosome exocytosis and plasma membrane repair. Interacts with STXBP1; this interaction promotes RAB3A dissociation from the vesicle membrane. Interacts with SNCA. Interacts with GDI1, GDI2, CHM and CHML; phosphorylation at Thr-86 disrupts these interactions. Interacts with MADD (via uDENN domain); the GTP-bound form is preferred for interaction. Mg(2+) serves as cofactor. In terms of processing, phosphorylation of Thr-86 in the switch II region by LRRK2 prevents the association of RAB regulatory proteins, including CHM, CHML and RAB GDP dissociation inhibitors GDI1 and GDI2. Specifically expressed in brain.

It is found in the cytoplasm. The protein resides in the cytosol. It localises to the lysosome. Its subcellular location is the cytoplasmic vesicle. The protein localises to the secretory vesicle. It is found in the cell projection. The protein resides in the axon. It localises to the cell membrane. Its subcellular location is the presynapse. The protein localises to the postsynapse. It carries out the reaction GTP + H2O = GDP + phosphate + H(+). Its activity is regulated as follows. Regulated by guanine nucleotide exchange factors (GEFs) including RAB3IL1 and MADD which promote the exchange of bound GDP for free GTP. Regulated by GTPase activating proteins (GAPs) including RAB3GAP1 and TBC1D10B which increase the GTP hydrolysis activity. Inhibited by GDP dissociation inhibitors (GDIs) which prevent Rab-GDP dissociation. Functionally, the small GTPases Rab are key regulators of intracellular membrane trafficking, from the formation of transport vesicles to their fusion with membranes. Rabs cycle between an inactive GDP-bound form and an active GTP-bound form that is able to recruit to membranes different sets of downstream effectors directly responsible for vesicle formation, movement, tethering and fusion. RAB3A plays a central role in regulated exocytosis and secretion. Controls the recruitment, tethering and docking of secretory vesicles to the plasma membrane. Upon stimulation, switches to its active GTP-bound form, cycles to vesicles and recruits effectors such as RIMS1, RIMS2, Rabphilin-3A/RPH3A, RPH3AL or SYTL4 to help the docking of vesicules onto the plasma membrane. Upon GTP hydrolysis by GTPase-activating protein, dissociates from the vesicle membrane allowing the exocytosis to proceed. Stimulates insulin secretion through interaction with RIMS2 or RPH3AL effectors in pancreatic beta cells. Regulates calcium-dependent lysosome exocytosis and plasma membrane repair (PMR) via the interaction with 2 effectors, SYTL4 and myosin-9/MYH9. Acts as a positive regulator of acrosome content secretion in sperm cells by interacting with RIMS1. Also plays a role in the regulation of dopamine release by interacting with synaptotagmin I/SYT. The chain is Ras-related protein Rab-3A (RAB3A) from Bos taurus (Bovine).